We begin with the raw amino-acid sequence, 103 residues long: Large ribosomal subunit protein bL21 (103 aa).

It belongs to the bacterial ribosomal protein bL21 family. In terms of assembly, part of the 50S ribosomal subunit. Contacts protein L20.

In terms of biological role, this protein binds to 23S rRNA in the presence of protein L20. The protein is Large ribosomal subunit protein bL21 of Herminiimonas arsenicoxydans.